Reading from the N-terminus, the 419-residue chain is L-rhamnose isomerase (419 aa).

Mn(2+)-binding residues include H262, D294, and D296.

It belongs to the rhamnose isomerase family. In terms of assembly, homotetramer. The cofactor is Mn(2+).

The protein localises to the cytoplasm. It catalyses the reaction L-rhamnopyranose = L-rhamnulose. It functions in the pathway carbohydrate degradation; L-rhamnose degradation; glycerone phosphate from L-rhamnose: step 1/3. Functionally, catalyzes the interconversion of L-rhamnose and L-rhamnulose. The chain is L-rhamnose isomerase from Escherichia coli O6:H1 (strain CFT073 / ATCC 700928 / UPEC).